A 124-amino-acid polypeptide reads, in one-letter code: Pal-related lipoprotein (124 aa).

An N-terminal signal peptide occupies residues 1 to 18; sequence MRYRAVFPMLIIVFALSG. C19 carries the N-palmitoyl cysteine lipid modification. A lipid anchor (S-diacylglycerol cysteine) is attached at C19.

It is found in the cell membrane. The polypeptide is Pal-related lipoprotein (slp) (Bacillus subtilis (strain 168)).